Consider the following 633-residue polypeptide: Threonine--tRNA ligase (633 aa).

Residues Met1–Thr61 enclose the TGS domain. The interval Asp242 to Pro533 is catalytic. Residues Cys333, His384, and His510 each coordinate Zn(2+).

This sequence belongs to the class-II aminoacyl-tRNA synthetase family. Homodimer. The cofactor is Zn(2+).

It is found in the cytoplasm. It carries out the reaction tRNA(Thr) + L-threonine + ATP = L-threonyl-tRNA(Thr) + AMP + diphosphate + H(+). In terms of biological role, catalyzes the attachment of threonine to tRNA(Thr) in a two-step reaction: L-threonine is first activated by ATP to form Thr-AMP and then transferred to the acceptor end of tRNA(Thr). Also edits incorrectly charged L-seryl-tRNA(Thr). This Laribacter hongkongensis (strain HLHK9) protein is Threonine--tRNA ligase.